The primary structure comprises 651 residues: Cylicin-1 (651 aa).

2 disordered regions span residues 110–241 and 267–615; these read LKKA…CSEN and NYSQ…CEPS. 2 stretches are compositionally biased toward basic and acidic residues: residues 111–129 and 146–173; these read KKAEYKKSKDEKGGTPLKK and QIVEEKTKRQNEADKTPLKSSHENEQSK. Residues 186 to 195 are compositionally biased toward polar residues; that stretch reads QNSKTVSKNC. Residues 196–205 show a composition bias toward basic and acidic residues; that stretch reads SQKDKKDSKN. Polar residues predominate over residues 230-241; it reads SNDPISEICSEN. Low complexity predominate over residues 271–281; it reads NNSKNYSLKYT. Tandem repeats lie at residues 278 to 305, 306 to 342, 343 to 379, 380 to 417, 418 to 453, 454 to 491, 492 to 531, and 532 to 553. Composition is skewed to basic and acidic residues over residues 284-308, 318-331, 338-368, 375-402, 413-441, and 448-482; these read TKKDTKKNAKKSSDAESEDSKDAKK, KKDDKKKDVKKDTE, GDSKDERKDTKKDKKKLKKDDKKKDTKKYPE, GDAKDARNDSRNLKKASKNDDKKKDAKK, LESKESQKDEKKDKKDSKTDNKKSVKNDE, and SEPKGDSKKGKKDEKKGKKDSKKDDKKKDAKKNAE. Residues 495–505 are compositionally biased toward basic residues; it reads DKKHSKEKKGS. Basic and acidic residues predominate over residues 506–518; that stretch reads KKDIKKDARKDTE. A compositionally biased stretch (polar residues) spans 529–538; that stretch reads KTGFKTSTKI. Residues 532–553 are 8 X approximate tandem repeats; it reads FKTSTKIKGSDTESEESLYKPG. The segment covering 587–607 has biased composition (basic and acidic residues); sequence TFNEKGEKASTGRVPPSREKP.

In terms of assembly, interacts with proteins of spermatozoa head including ACTL7A, CCIN, FAM209A and SPACA1; the interactions may be necessary for proper acrosome attachment to the nuclear envelope. Testis.

Its subcellular location is the cytoplasm. It localises to the cytoskeleton. The protein localises to the perinuclear theca. The protein resides in the calyx. Plays a role in the establishment of normal sperm morphology during spermatogenesis and is required for acrosome attachment to the nuclear envelope. This is Cylicin-1 (CYLC1) from Homo sapiens (Human).